The following is a 63-amino-acid chain: Large ribosomal subunit protein bL28 (63 aa).

This sequence belongs to the bacterial ribosomal protein bL28 family.

The polypeptide is Large ribosomal subunit protein bL28 (Clostridium perfringens (strain SM101 / Type A)).